We begin with the raw amino-acid sequence, 259 residues long: Tegument protein UL51 homolog (259 aa).

Cys9 carries S-palmitoyl cysteine; by host lipidation.

This sequence belongs to the herpesviridae UL51 family. Oligomerizes. Interacts with ORF53; this interaction mediates ORF53 incorporation to virions. Post-translationally, phosphorylated. Palmitoylation is necessary for Golgi localization.

Its subcellular location is the virion tegument. The protein resides in the host cytoplasm. It is found in the host Golgi apparatus. Functionally, plays several roles during the time course of infection, including egress of virus particles from the perinuclear space and secondary envelopment of cytoplasmic capsids that bud into specific trans-Golgi network (TGN)-derived membranes. This is Tegument protein UL51 homolog from Varicella-zoster virus (strain Dumas) (HHV-3).